The chain runs to 788 residues: Serine/threonine-protein kinase MARK2 (788 aa).

The disordered stretch occupies residues methionine 1–glutamate 46. A compositionally biased stretch (polar residues) spans lysine 27–aspartate 45. Position 40 is a phosphoserine (serine 40). Positions tyrosine 53–methionine 304 constitute a Protein kinase domain. Position 58 is a phosphothreonine; by autocatalysis (threonine 58). ATP-binding positions include isoleucine 59–valine 67 and lysine 82. Phosphoserine; by CaMK1 occurs at positions 91, 92, and 93. The active-site Proton acceptor is the aspartate 175. A Phosphothreonine; by LKB1 and TAOK1 modification is found at threonine 208. The residue at position 212 (serine 212) is a Phosphoserine; by GSK3-beta. At serine 274 the chain carries Phosphoserine; by autocatalysis. At threonine 275 the chain carries Phosphothreonine; by autocatalysis. The residue at position 294 (threonine 294) is a Phosphothreonine; by CaMK1. Residues tyrosine 323–glycine 362 form the UBA domain. The segment at isoleucine 373–glycine 632 is disordered. Phosphoserine occurs at positions 376 and 409. Residues proline 418–alanine 432 are compositionally biased toward polar residues. Residues glutamate 433 to arginine 445 show a composition bias toward basic and acidic residues. Serine 456 carries the phosphoserine modification. The residue at position 467 (threonine 467) is a Phosphothreonine. Residues threonine 467 to serine 486 are compositionally biased toward polar residues. Phosphoserine is present on residues serine 486 and serine 493. Polar residues predominate over residues glycine 495–aspartate 504. The span at serine 511–alanine 525 shows a compositional bias: low complexity. Phosphoserine occurs at positions 569, 571, and 592. The residue at position 596 (threonine 596) is a Phosphothreonine; by PKC/PRKCZ. 2 positions are modified to phosphoserine: serine 619 and serine 722. Residues threonine 739–leucine 788 enclose the KA1 domain.

Belongs to the protein kinase superfamily. CAMK Ser/Thr protein kinase family. SNF1 subfamily. In terms of assembly, homodimer. Interacts with PAK5; leading to inhibit the protein kinase activity. Interacts with MAPT/TAU. Interacts with MTCL1 isoform 1; the interaction is direct and increases MARK2 microtubule-binding ability. Interacts (when phosphorylated at Thr-596) with YWHAZ. Interacts with YWHAB, YWHAG and YWHAQ. As to quaternary structure, (Microbial infection) In case of infection, interacts with H.pylori CagA, leading to inhibit kinase activity and junctional and polarity defects. Mg(2+) is required as a cofactor. Autophosphorylated. Phosphorylated at Thr-208 by STK11/LKB1 in complex with STE20-related adapter-alpha (STRADA) pseudo kinase and CAB39. Phosphorylation at Thr-208 by TAOK1 activates the kinase activity, leading to phosphorylation and detachment of MAPT/TAU from microtubules. Phosphorylation at Ser-212 by GSK3-beta (GSK3B) inhibits the kinase activity. Phosphorylation by CaMK1 promotes activity and is required to promote neurite outgrowth. Phosphorylation at Thr-596 by PRKCZ/aPKC in polarized epithelial cells inhibits the kinase activity and promotes binding to 14-3-3 protein YWHAZ, leading to relocation from cell membrane to cytoplasm. In terms of tissue distribution, high levels of expression in heart, brain, skeletal muscle and pancreas, lower levels observed in lung, liver and kidney.

It is found in the cell membrane. Its subcellular location is the cytoplasm. The protein localises to the lateral cell membrane. It localises to the cytoskeleton. The protein resides in the cell projection. It is found in the dendrite. The catalysed reaction is L-seryl-[protein] + ATP = O-phospho-L-seryl-[protein] + ADP + H(+). It carries out the reaction L-threonyl-[protein] + ATP = O-phospho-L-threonyl-[protein] + ADP + H(+). It catalyses the reaction L-seryl-[tau protein] + ATP = O-phospho-L-seryl-[tau protein] + ADP + H(+). The enzyme catalyses L-threonyl-[tau protein] + ATP = O-phospho-L-threonyl-[tau protein] + ADP + H(+). With respect to regulation, inhibited by PAK5; inhibition is independent of the kinase activity of PAK5. Activated by phosphorylation on Thr-208. Inhibited by phosphorylation at Ser-212 and Thr-596. Inhibited by hymenialdisine. Specifically inhibited by the H.pylori CagA peptide FPLKRHDKVDDLSK that mimics host substrates and binds to the kinase substrate-binding site. Its function is as follows. Serine/threonine-protein kinase. Involved in cell polarity and microtubule dynamics regulation. Phosphorylates CRTC2/TORC2, DCX, HDAC7, KIF13B, MAP2, MAP4 and RAB11FIP2. Phosphorylates the microtubule-associated protein MAPT/TAU. Plays a key role in cell polarity by phosphorylating the microtubule-associated proteins MAP2, MAP4 and MAPT/TAU at KXGS motifs, causing detachment from microtubules, and their disassembly. Regulates epithelial cell polarity by phosphorylating RAB11FIP2. Involved in the regulation of neuronal migration through its dual activities in regulating cellular polarity and microtubule dynamics, possibly by phosphorylating and regulating DCX. Regulates axogenesis by phosphorylating KIF13B, promoting interaction between KIF13B and 14-3-3 and inhibiting microtubule-dependent accumulation of KIF13B. Also required for neurite outgrowth and establishment of neuronal polarity. Regulates localization and activity of some histone deacetylases by mediating phosphorylation of HDAC7, promoting subsequent interaction between HDAC7 and 14-3-3 and export from the nucleus. Also acts as a positive regulator of the Wnt signaling pathway, probably by mediating phosphorylation of dishevelled proteins (DVL1, DVL2 and/or DVL3). Modulates the developmental decision to build a columnar versus a hepatic epithelial cell apparently by promoting a switch from a direct to a transcytotic mode of apical protein delivery. Essential for the asymmetric development of membrane domains of polarized epithelial cells. The polypeptide is Serine/threonine-protein kinase MARK2 (Homo sapiens (Human)).